We begin with the raw amino-acid sequence, 101 residues long: Urease subunit beta (101 aa).

Belongs to the urease beta subunit family. As to quaternary structure, heterotrimer of UreA (gamma), UreB (beta) and UreC (alpha) subunits. Three heterotrimers associate to form the active enzyme.

It is found in the cytoplasm. The catalysed reaction is urea + 2 H2O + H(+) = hydrogencarbonate + 2 NH4(+). Its pathway is nitrogen metabolism; urea degradation; CO(2) and NH(3) from urea (urease route): step 1/1. The protein is Urease subunit beta of Azoarcus sp. (strain BH72).